A 354-amino-acid chain; its full sequence is Guanine nucleotide-binding protein G(i) subunit alpha (354 aa).

G2 carries the N-myristoyl glycine lipid modification. C3 carries S-palmitoyl cysteine lipidation. The region spanning 32-354 is the G-alpha domain; sequence REVKLLLLGA…KNNLKDCGLF (323 aa). The interval 35 to 48 is G1 motif; that stretch reads KLLLLGAGESGKST. Residues 40 to 47, 175 to 181, 200 to 204, 269 to 272, and A326 contribute to the GTP site; these read GAGESGKS, LRTRVKT, DVGGQ, and NKKD. Mg(2+) contacts are provided by S47 and T181. Residues 173-181 form a G2 motif region; sequence DVLRTRVKT. Residues 196-205 are G3 motif; it reads FKMFDVGGQR. A G4 motif region spans residues 265-272; the sequence is ILFLNKKD. The G5 motif stretch occupies residues 324 to 329; sequence TCATDT.

This sequence belongs to the G-alpha family. G(i/o/t/z) subfamily. In terms of assembly, g proteins are composed of 3 units; alpha, beta and gamma. The alpha chain contains the guanine nucleotide binding site.

Functionally, guanine nucleotide-binding proteins (G proteins) are involved as modulators or transducers in various transmembrane signaling systems. This G protein is involved in 1-methyladenine-induced oocyte maturation. This chain is Guanine nucleotide-binding protein G(i) subunit alpha, found in Patiria pectinifera (Starfish).